The following is a 384-amino-acid chain: Urea transporter 1 (384 aa).

Positions 1 to 23 are disordered; that stretch reads MDDNPTAVKLDQGGNQAPQGQGR. 5 helical membrane passes run 61–81, 85–105, 111–131, 138–158, and 168–188; these read ISQV…VGLL, PWCA…ALLL, AITA…MAIY, FWWL…FSSA, and LPVF…ATGH. N-linked (GlcNAc...) asparagine glycosylation is present at N206. 3 helical membrane passes run 237-257, 279-299, and 327-347; these read GGIF…HAAI, GLWG…FMAL, and VVGL…FLLL.

Belongs to the urea transporter family. Homotrimer; each subunit contains a pore through which urea permeates. Identified in a complex with STOM.

It is found in the cell membrane. The protein localises to the basolateral cell membrane. It carries out the reaction urea(in) = urea(out). In terms of biological role, mediates the transport of urea driven by a concentration gradient across the cell membranes of erythrocytes and the renal inner medullary collecting duct which is critical to the urinary concentrating mechanism. Facilitates water transport in erythrocytes. In Capra hircus (Goat), this protein is Urea transporter 1 (SLC14A1).